The chain runs to 107 residues: UPF0145 protein YbjQ (107 aa).

It belongs to the UPF0145 family.

The sequence is that of UPF0145 protein YbjQ from Shigella flexneri.